Reading from the N-terminus, the 116-residue chain is Ribosome-binding factor A (116 aa).

This sequence belongs to the RbfA family. As to quaternary structure, monomer. Binds 30S ribosomal subunits, but not 50S ribosomal subunits or 70S ribosomes.

It localises to the cytoplasm. Its function is as follows. One of several proteins that assist in the late maturation steps of the functional core of the 30S ribosomal subunit. Associates with free 30S ribosomal subunits (but not with 30S subunits that are part of 70S ribosomes or polysomes). Required for efficient processing of 16S rRNA. May interact with the 5'-terminal helix region of 16S rRNA. This is Ribosome-binding factor A from Levilactobacillus brevis (strain ATCC 367 / BCRC 12310 / CIP 105137 / JCM 1170 / LMG 11437 / NCIMB 947 / NCTC 947) (Lactobacillus brevis).